A 298-amino-acid polypeptide reads, in one-letter code: Elongation factor Ts (298 aa).

Residues 78–81 form an involved in Mg(2+) ion dislocation from EF-Tu region; that stretch reads TDFV.

The protein belongs to the EF-Ts family.

It is found in the cytoplasm. Functionally, associates with the EF-Tu.GDP complex and induces the exchange of GDP to GTP. It remains bound to the aminoacyl-tRNA.EF-Tu.GTP complex up to the GTP hydrolysis stage on the ribosome. The sequence is that of Elongation factor Ts from Mycoplasmopsis agalactiae (strain NCTC 10123 / CIP 59.7 / PG2) (Mycoplasma agalactiae).